Consider the following 592-residue polypeptide: Proteasome-associated ATPase (592 aa).

A compositionally biased stretch (acidic residues) spans 1 to 11; the sequence is MTGYDSSEEAE. The segment at 1–24 is disordered; sequence MTGYDSSEEAERDSSPADGYRQTP. A coiled-coil region spans residues 25-99; sequence AQLSAQIRVL…LKEEVDRLAQ (75 aa). Residue 281–286 coordinates ATP; that stretch reads GCGKTL. Positions 591 to 592 are docks into pockets in the proteasome alpha-ring; the sequence is YL.

The protein belongs to the AAA ATPase family. In terms of assembly, homohexamer. Assembles into a hexameric ring structure that caps the 20S proteasome core. Strongly interacts with the prokaryotic ubiquitin-like protein Pup through a hydrophobic interface; the interacting region of ARC lies in its N-terminal coiled-coil domain. There is one Pup binding site per ARC hexamer ring. Upon ATP-binding, the C-terminus of ARC interacts with the alpha-rings of the proteasome core, possibly by binding to the intersubunit pockets.

It participates in protein degradation; proteasomal Pup-dependent pathway. In terms of biological role, ATPase which is responsible for recognizing, binding, unfolding and translocation of pupylated proteins into the bacterial 20S proteasome core particle. May be essential for opening the gate of the 20S proteasome via an interaction with its C-terminus, thereby allowing substrate entry and access to the site of proteolysis. Thus, the C-termini of the proteasomal ATPase may function like a 'key in a lock' to induce gate opening and therefore regulate proteolysis. The chain is Proteasome-associated ATPase from Nakamurella multipartita (strain ATCC 700099 / DSM 44233 / CIP 104796 / JCM 9543 / NBRC 105858 / Y-104) (Microsphaera multipartita).